The sequence spans 224 residues: Glutamate/aspartate import permease protein GltK (224 aa).

Over 1-19 (MYEFDWSSIVPSLPYLLDG) the chain is Periplasmic. The helical transmembrane segment at 20 to 40 (LVITLKITVTAVVIGILWGTM) threads the bilayer. An ABC transmembrane type-1 domain is found at 20-216 (LVITLKITVT…VISLSASLLV (197 aa)). Residues 41-67 (LAVMRLSSFAPVAWFAKAYVNVFRSIP) are Cytoplasmic-facing. Residues 68-88 (LVMVLLWFYLIVPGFLQNVLG) traverse the membrane as a helical segment. Topologically, residues 89-94 (LSPKND) are periplasmic. A helical transmembrane segment spans residues 95–112 (IRLISAMVAFSMFEAAYY). Residues 113–154 (SEIIRAGIQSISRGQSSAALALGMTHWQSMKLIILPQAFRAM) are Cytoplasmic-facing. Residues 155–175 (VPLLLTQGIVLFQDTSLVYVL) traverse the membrane as a helical segment. The Periplasmic segment spans residues 176-196 (SLADFFRTASTIGERDGTQVE). The helical transmembrane segment at 197-217 (MILFAGFVYFVISLSASLLVS) threads the bilayer. The Cytoplasmic segment spans residues 218-224 (YLKRRTA).

Belongs to the binding-protein-dependent transport system permease family. HisMQ subfamily. In terms of assembly, the complex is composed of two ATP-binding proteins (GltL), two transmembrane proteins (GltJ and GltK) and a solute-binding protein (GltI).

It is found in the cell inner membrane. Its function is as follows. Part of the ABC transporter complex GltIJKL involved in glutamate and aspartate uptake. Probably responsible for the translocation of the substrate across the membrane. This chain is Glutamate/aspartate import permease protein GltK (gltK), found in Escherichia coli O157:H7.